The chain runs to 500 residues: NAD(P)H-quinone oxidoreductase chain 4, chloroplastic (500 aa).

14 consecutive transmembrane segments (helical) span residues 4–24 (FPWL…ILFL), 37–57 (LCIC…HFQL), 84–104 (GISI…TLAA), 111–129 (SRVF…IGPF), 134–154 (LLLF…LLSM), 167–187 (FILY…GICL), 208–228 (ALEM…SPII), 242–262 (HYST…YGLV), 272–292 (AHSI…IYAA), 305–325 (IAYS…SIND), 330–350 (GAIL…FLAG), 386–406 (LALP…GILT), 416–436 (ILIT…SLSM), and 462–482 (FFVS…PDFV).

This sequence belongs to the complex I subunit 4 family.

The protein resides in the plastid. Its subcellular location is the chloroplast thylakoid membrane. It catalyses the reaction a plastoquinone + NADH + (n+1) H(+)(in) = a plastoquinol + NAD(+) + n H(+)(out). The catalysed reaction is a plastoquinone + NADPH + (n+1) H(+)(in) = a plastoquinol + NADP(+) + n H(+)(out). This Morus indica (Mulberry) protein is NAD(P)H-quinone oxidoreductase chain 4, chloroplastic.